Consider the following 445-residue polypeptide: 3-phosphoshikimate 1-carboxyvinyltransferase (445 aa).

Positions 28, 29, and 33 each coordinate 3-phosphoshikimate. K28 contacts phosphoenolpyruvate. Phosphoenolpyruvate-binding residues include G101 and R129. 3-phosphoshikimate is bound by residues S175, Q177, D328, and K355. Residue Q177 participates in phosphoenolpyruvate binding. Residue D328 is the Proton acceptor of the active site. Residues R359 and R402 each contribute to the phosphoenolpyruvate site.

This sequence belongs to the EPSP synthase family. In terms of assembly, monomer.

It is found in the cytoplasm. The enzyme catalyses 3-phosphoshikimate + phosphoenolpyruvate = 5-O-(1-carboxyvinyl)-3-phosphoshikimate + phosphate. The protein operates within metabolic intermediate biosynthesis; chorismate biosynthesis; chorismate from D-erythrose 4-phosphate and phosphoenolpyruvate: step 6/7. In terms of biological role, catalyzes the transfer of the enolpyruvyl moiety of phosphoenolpyruvate (PEP) to the 5-hydroxyl of shikimate-3-phosphate (S3P) to produce enolpyruvyl shikimate-3-phosphate and inorganic phosphate. This chain is 3-phosphoshikimate 1-carboxyvinyltransferase, found in Rhodopseudomonas palustris (strain BisA53).